Consider the following 166-residue polypeptide: Phosphopantetheine adenylyltransferase (166 aa).

Substrate is bound at residue serine 11. Residues 11–12 (SF) and histidine 19 contribute to the ATP site. Substrate contacts are provided by lysine 43, alanine 76, and arginine 90. ATP contacts are provided by residues 91–93 (GLR), glutamate 101, and 126–132 (YRYFSSS).

It belongs to the bacterial CoaD family. As to quaternary structure, homohexamer. Mg(2+) is required as a cofactor.

Its subcellular location is the cytoplasm. The catalysed reaction is (R)-4'-phosphopantetheine + ATP + H(+) = 3'-dephospho-CoA + diphosphate. Its pathway is cofactor biosynthesis; coenzyme A biosynthesis; CoA from (R)-pantothenate: step 4/5. Functionally, reversibly transfers an adenylyl group from ATP to 4'-phosphopantetheine, yielding dephospho-CoA (dPCoA) and pyrophosphate. The polypeptide is Phosphopantetheine adenylyltransferase (Streptococcus mutans serotype c (strain ATCC 700610 / UA159)).